Consider the following 61-residue polypeptide: uncharacterized protein (61 aa).

Residues 24 to 60 (WMRYESERDEKLRMLERMRDELEAELEEIKREIERLR) adopt a coiled-coil conformation.

This is an uncharacterized protein from Archaeoglobus fulgidus (strain ATCC 49558 / DSM 4304 / JCM 9628 / NBRC 100126 / VC-16).